Reading from the N-terminus, the 91-residue chain is Pre-early 3 receptor internalization and degradation alpha protein (91 aa).

The Cytoplasmic segment spans residues Met-1–Arg-4. A propeptide spans Met-1 to Ala-22 (signal peptide). Residues Val-5–Ala-25 traverse the membrane as a helical segment. Residues His-26–Pro-34 are Lumenal-facing. The chain crosses the membrane as a helical span at residues Phe-35–Ile-60. Topologically, residues Gln-61–Leu-91 are cytoplasmic.

The protein belongs to the adenoviridae E3-RID-alpha family. In terms of assembly, homodimer with only one chain cleaved by signal peptidase. Interacts with E3 RID-beta and E3 CR1-alpha. In terms of processing, the signal peptide is only cleaved partially by host signal peptidase. This results in two forms of the protein, one uncleaved with two transmembrane regions, and one cleaved with one transmembrane region.

The protein resides in the host membrane. Its subcellular location is the host endoplasmic reticulum. Its function is as follows. Prevents infected cell apoptosis induced by the host immune system. Acts by down-regulating a number of cell surface receptors in the tumor necrosis factor (TNF) receptor superfamily, namely FAS, TNFRSF10A/TRAIL receptor 1, and TNFRSF10B/TRAIL receptor 2. Down-regulation of these death receptors protects adenovirus-infected cells from apoptosis induced by the death receptor ligands Fas ligand and TRAIL. RID complex also down-regulates certain tyrosine kinase cell surface receptors, especially the epidermal growth factor receptor (EGFR). RID-mediated Fas and EGFR down-regulation occurs via endocytosis of the receptors into endosomes followed by transport to and degradation within lysosomes. The polypeptide is Pre-early 3 receptor internalization and degradation alpha protein (Homo sapiens (Human)).